Here is a 675-residue protein sequence, read N- to C-terminus: Vitamin K-dependent protein S (675 aa).

Positions 1–24 (MRVLSVRFRVLLACLALVLPNSET) are cleaved as a signal peptide. The propeptide occupies 25–41 (NFLSKERASQVLVRKRR). In terms of domain architecture, Gla spans 42-87 (ANTLLEETKKGNLERECIEELCNKEEAREVFENNPETDYFYPKYLG). A 4-carboxyglutamate mark is found at glutamate 47, glutamate 48, glutamate 55, glutamate 57, glutamate 60, glutamate 61, glutamate 66, glutamate 67, glutamate 70, glutamate 73, and glutamate 77. An intrachain disulfide couples cysteine 58 to cysteine 63. The interval 88–116 (CLGAFRVGAFSAARQSANAYPDLRSCVNA) is thrombin-sensitive. The region spanning 117–155 (IPDQCDPMPCNEDGYLSCKDGQGAFTCICKPGWQGDKCQ) is the EGF-like 1 domain. Intrachain disulfides connect cysteine 121/cysteine 134, cysteine 126/cysteine 143, cysteine 145/cysteine 154, cysteine 161/cysteine 175, cysteine 171/cysteine 184, cysteine 186/cysteine 199, cysteine 205/cysteine 217, cysteine 212/cysteine 226, cysteine 228/cysteine 241, cysteine 247/cysteine 256, cysteine 252/cysteine 265, cysteine 267/cysteine 282, and cysteine 449/cysteine 475. Aspartate 136 bears the (3R)-3-hydroxyaspartate mark. Residues 157 to 200 (DINECKDPSNINGGCSQTCDNTPGSYHCSCKIGFAMLTNKKDCK) form the EGF-like 2; calcium-binding domain. In terms of domain architecture, EGF-like 3; calcium-binding spans 201 to 242 (DVDECSLKPSVCGTAVCKNIPGDFECECPNGYRYDPSSKSCK). Residues 243 to 283 (DVDECSENTCAQLCVNYPGGYSCYCDGKKGFKLAQDQRSCE) enclose the EGF-like 4; calcium-binding domain. Laminin G-like domains are found at residues 299–475 (LLYL…NKHC) and 484–665 (YYPG…AHSC). Residues asparagine 499 and asparagine 509 are each glycosylated (N-linked (GlcNAc...) asparagine).

In terms of processing, the iron and 2-oxoglutarate dependent 3-hydroxylation of aspartate and asparagine is (R) stereospecific within EGF domains. Plasma.

Its subcellular location is the secreted. Anticoagulant plasma protein; it is a cofactor to activated protein C in the degradation of coagulation factors Va and VIIIa. It helps to prevent coagulation and stimulating fibrinolysis. This Rattus norvegicus (Rat) protein is Vitamin K-dependent protein S (Pros1).